A 622-amino-acid chain; its full sequence is FERM domain-containing protein 6 (622 aa).

The FERM domain occupies R16 to Q328. Residues L357 to D452 are disordered. 2 stretches are compositionally biased toward low complexity: residues H384–S395 and S425–V438. Residue S522 is modified to Phosphoserine. A Phosphothreonine modification is found at T523. Phosphoserine occurs at positions 525, 542, and 544.

The protein resides in the cytoplasm. It localises to the cell membrane. This Mus musculus (Mouse) protein is FERM domain-containing protein 6 (Frmd6).